Consider the following 590-residue polypeptide: MLRIAQTLEAQLRAAMQQAFPEADGELNPALGPASKPEFGDFQANGALALAKPLKQAPRQIAAAIVEQLQNNPEFSALAEAPQIAGPGFINITLKPSVLAAEVRQRIGDPRLGVAAVEQAEAPVIVDFSSPNIAKEMHVGHLRSTIIGDCLARVLEFRGHQVLRLNHVGDWGTQFGMLITHLKQVAPEALNTADAIDLGDLVAFYREAKKRFDDDEAFQTTSREEVVKLQGGDATSLKAWGLLCDQSRREFQKIYDRLDIRLNERGESFYNPQLAAVVDDLRSSGLLVTDEGAGCVFLEGVVGKEGKPLPLIVQKSDGGFNYATTDLAAIRYRLGSAGDGAGRVIYVTDAGQAAHFAGVFQVAKRAGWVPAAASLEHVPFGLVQGDDGKKLKTRAGDTVRLKDLLDEAVERAQADLRRRLEEEERQESESFIDQVATTVGLAAVKYADLSTNRITNYQFSFERMLALTGNTAPYLLYAVVRISGIARKGGALDGELPERLVFEEPQEWALIRQLLQLDAVISEVESDLLPNRLCTYLFELSQSFNRFYDQVPVLKADEPMRSSRLALCRLAADTLKLGLSLLGIPSLERM.

The short motif at 131 to 141 (PNIAKEMHVGH) is the 'HIGH' region element.

Belongs to the class-I aminoacyl-tRNA synthetase family. As to quaternary structure, monomer.

It localises to the cytoplasm. The catalysed reaction is tRNA(Arg) + L-arginine + ATP = L-arginyl-tRNA(Arg) + AMP + diphosphate. In Synechococcus sp. (strain RCC307), this protein is Arginine--tRNA ligase.